We begin with the raw amino-acid sequence, 105 residues long: Large ribosomal subunit protein eL36 (105 aa).

It belongs to the eukaryotic ribosomal protein eL36 family. As to quaternary structure, component of the large ribosomal subunit.

The protein localises to the cytoplasm. The protein resides in the cytosol. In terms of biological role, component of the large ribosomal subunit. The ribosome is a large ribonucleoprotein complex responsible for the synthesis of proteins in the cell. The protein is Large ribosomal subunit protein eL36 (rpl36) of Xenopus laevis (African clawed frog).